Reading from the N-terminus, the 447-residue chain is Ribosomal protein uS12 methylthiotransferase RimO (447 aa).

Positions 4-114 constitute an MTTase N-terminal domain; that stretch reads PKVGFVSLGC…VMEAVHEYVP (111 aa). 6 residues coordinate [4Fe-4S] cluster: Cys13, Cys49, Cys78, Cys147, Cys151, and Cys154. The Radical SAM core domain occupies 133-370; it reads LTPKHYAYLK…MQVQQQISAA (238 aa). A TRAM domain is found at 373–443; the sequence is QKRIGQTMTV…EYDLFAKLIK (71 aa).

The protein belongs to the methylthiotransferase family. RimO subfamily. The cofactor is [4Fe-4S] cluster.

The protein resides in the cytoplasm. The catalysed reaction is L-aspartate(89)-[ribosomal protein uS12]-hydrogen + (sulfur carrier)-SH + AH2 + 2 S-adenosyl-L-methionine = 3-methylsulfanyl-L-aspartate(89)-[ribosomal protein uS12]-hydrogen + (sulfur carrier)-H + 5'-deoxyadenosine + L-methionine + A + S-adenosyl-L-homocysteine + 2 H(+). Its function is as follows. Catalyzes the methylthiolation of an aspartic acid residue of ribosomal protein uS12. The chain is Ribosomal protein uS12 methylthiotransferase RimO from Acinetobacter baumannii (strain AB0057).